Reading from the N-terminus, the 291-residue chain is Sulfotransferase 1A1 (291 aa).

Residue 44–49 participates in 3'-phosphoadenylyl sulfate binding; it reads KSGTNW. 102–104 is a binding site for substrate; that stretch reads KTH. The active-site Proton acceptor is His104. 3'-phosphoadenylyl sulfate-binding positions include Arg126, Ser134, Tyr189, 223–228, and 251–255; these read TSFKKM and FMRKG. Residue Ser134 is modified to Phosphoserine.

The protein belongs to the sulfotransferase 1 family. Homodimer. Expressed in brain, colon, liver, and small intestine of mice colonized with B.ovatus and L.plantarum.

It is found in the cytoplasm. It catalyses the reaction a phenol + 3'-phosphoadenylyl sulfate = an aryl sulfate + adenosine 3',5'-bisphosphate + H(+). The enzyme catalyses 17beta-estradiol + 3'-phosphoadenylyl sulfate = 17beta-estradiol 3-sulfate + adenosine 3',5'-bisphosphate + H(+). The catalysed reaction is 4-ethylphenol + 3'-phosphoadenylyl sulfate = 4-ethylphenyl sulfate + adenosine 3',5'-bisphosphate + H(+). It carries out the reaction 4-nitrophenol + 3'-phosphoadenylyl sulfate = 4-nitrophenyl sulfate + adenosine 3',5'-bisphosphate. It catalyses the reaction dopamine + 3'-phosphoadenylyl sulfate = dopamine 3-O-sulfate + adenosine 3',5'-bisphosphate + H(+). The enzyme catalyses dopamine + 3'-phosphoadenylyl sulfate = dopamine 4-O-sulfate + adenosine 3',5'-bisphosphate + H(+). The catalysed reaction is 3,3',5-triiodo-L-thyronine + 3'-phosphoadenylyl sulfate = 3,3',5-triiodo-L-thyronine sulfate + adenosine 3',5'-bisphosphate + H(+). It carries out the reaction 3,3',5'-triiodo-L-thyronine + 3'-phosphoadenylyl sulfate = 3,3',5'-triiodo-L-thyronine sulfate + adenosine 3',5'-bisphosphate + H(+). It catalyses the reaction 3,3'-diiodo-L-thyronine + 3'-phosphoadenylyl sulfate = 3,3'-diiodo-L-thyronine sulfate + adenosine 3',5'-bisphosphate + H(+). The enzyme catalyses L-thyroxine + 3'-phosphoadenylyl sulfate = L-thyroxine sulfate + adenosine 3',5'-bisphosphate + H(+). Sulfotransferase that utilizes 3'-phospho-5'-adenylyl sulfate (PAPS) as sulfonate donor to catalyze the sulfate conjugation of a wide variety of acceptor molecules bearing a hydroxyl or an amine group. Sulfonation increases the water solubility of most compounds, and therefore their renal excretion, but it can also result in bioactivation to form active metabolites. Displays broad substrate specificity for small phenolic compounds. Plays an important role in the sulfonation of endogenous molecules such as steroid hormones. Mediates also the metabolic activation of carcinogenic N-hydroxyarylamines leading to highly reactive intermediates capable of forming DNA adducts, potentially resulting in mutagenesis. May play a role in gut microbiota-host metabolic interaction. O-sulfonates 4-ethylphenol (4-EP), a dietary tyrosine-derived metabolite produced by gut bacteria. The product 4-EPS crosses the blood-brain barrier and may negatively regulate oligodendrocyte maturation and myelination, affecting the functional connectivity of different brain regions associated with the limbic system. Catalyzes the sulfate conjugation of dopamine. Catalyzes the sulfation of T4 (L-thyroxine/3,5,3',5'-tetraiodothyronine), T3 (3,5,3'-triiodothyronine), rT3 (3,3',5'-triiodothyronine) and 3,3'-T2 (3,3'-diiodothyronine), with a substrate preference of 3,3'-T2 &gt; rT3 &gt; T3 &gt; T4. The chain is Sulfotransferase 1A1 (Sult1a1) from Mus musculus (Mouse).